Reading from the N-terminus, the 356-residue chain is MLKVLAIETSCDETSVSVVSNSNDIYKIHSNIVASQIEDHSKWGGVVPELAARKHLELIPFVLEEALEESKISIEEIDAIASTVTPGLVGCLRVGSITARSLCTLYSKPFLGIHHLEGHLSSILFSKNYPKPPFLTLLVSGGHTELIKIGERRIMQRLGRSYDDAAGEAFDKVGRLLGLSYPGGPAIAEIAKKGNSLKFNLPKCKISDKKGGFLKYDFSFSGLKTAVLRLVEKIRLNGDEIPIPDIAASFERVVSEVLVERTIKCAVDYDLDNVVVVGGVAANDTLRKMMISEAGKKSIKVHLAPLNLCTDNAAMIGAAALFRLKFKAHESSLELGISGRLPIDQANTLYANKPPF.

Histidine 115 and histidine 119 together coordinate Fe cation. Residues leucine 138–glycine 142, aspartate 171, glycine 184, and asparagine 283 contribute to the substrate site. Residue aspartate 311 participates in Fe cation binding.

It belongs to the KAE1 / TsaD family. The cofactor is Fe(2+).

The protein localises to the cytoplasm. The enzyme catalyses L-threonylcarbamoyladenylate + adenosine(37) in tRNA = N(6)-L-threonylcarbamoyladenosine(37) in tRNA + AMP + H(+). Required for the formation of a threonylcarbamoyl group on adenosine at position 37 (t(6)A37) in tRNAs that read codons beginning with adenine. Is involved in the transfer of the threonylcarbamoyl moiety of threonylcarbamoyl-AMP (TC-AMP) to the N6 group of A37, together with TsaE and TsaB. TsaD likely plays a direct catalytic role in this reaction. This is tRNA N6-adenosine threonylcarbamoyltransferase from Prochlorococcus marinus (strain MIT 9515).